Here is a 501-residue protein sequence, read N- to C-terminus: Pyruvate kinase (501 aa).

R50 contributes to the substrate binding site. The K(+) site is built by N52, S54, D85, and T86. Residue 52–55 (NFSH) participates in ATP binding. Residues R92 and K178 each coordinate ATP. E243 is a binding site for Mg(2+). Substrate is bound by residues G266, D267, and T299. D267 is a Mg(2+) binding site.

Belongs to the pyruvate kinase family. In terms of assembly, homotetramer. It depends on Mg(2+) as a cofactor. K(+) is required as a cofactor.

The catalysed reaction is pyruvate + ATP = phosphoenolpyruvate + ADP + H(+). It participates in carbohydrate degradation; glycolysis; pyruvate from D-glyceraldehyde 3-phosphate: step 5/5. The chain is Pyruvate kinase (PYK1) from Naumovozyma castellii (Yeast).